The sequence spans 200 residues: 3-isopropylmalate dehydratase small subunit (200 aa).

It belongs to the LeuD family. LeuD type 1 subfamily. As to quaternary structure, heterodimer of LeuC and LeuD.

It carries out the reaction (2R,3S)-3-isopropylmalate = (2S)-2-isopropylmalate. Its pathway is amino-acid biosynthesis; L-leucine biosynthesis; L-leucine from 3-methyl-2-oxobutanoate: step 2/4. Its function is as follows. Catalyzes the isomerization between 2-isopropylmalate and 3-isopropylmalate, via the formation of 2-isopropylmaleate. The chain is 3-isopropylmalate dehydratase small subunit from Campylobacter jejuni subsp. doylei (strain ATCC BAA-1458 / RM4099 / 269.97).